The chain runs to 116 residues: Ribulose bisphosphate carboxylase small subunit 1 (116 aa).

Belongs to the RuBisCO small chain family. In terms of assembly, heterohexadecamer of 8 large and 8 small subunits.

The protein localises to the cytoplasm. RuBisCO catalyzes two reactions: the carboxylation of D-ribulose 1,5-bisphosphate, the primary event in carbon dioxide fixation, as well as the oxidative fragmentation of the pentose substrate. Both reactions occur simultaneously and in competition at the same active site. Although the small subunit is not catalytic it is essential for maximal activity. In terms of biological role, can replace the endogenous type I ccbS gene in H.neapolitanus, reconstituting RuBisCO with about 10% of normal activity; the active enzyme is targeted to carboxysomes. The sequence is that of Ribulose bisphosphate carboxylase small subunit 1 from Hydrogenovibrio crunogenus (strain DSM 25203 / XCL-2) (Thiomicrospira crunogena).